A 348-amino-acid chain; its full sequence is UDP-3-O-acylglucosamine N-acyltransferase (348 aa).

Residue His-243 is the Proton acceptor of the active site.

The protein belongs to the transferase hexapeptide repeat family. LpxD subfamily. As to quaternary structure, homotrimer.

It catalyses the reaction a UDP-3-O-[(3R)-3-hydroxyacyl]-alpha-D-glucosamine + a (3R)-hydroxyacyl-[ACP] = a UDP-2-N,3-O-bis[(3R)-3-hydroxyacyl]-alpha-D-glucosamine + holo-[ACP] + H(+). It functions in the pathway bacterial outer membrane biogenesis; LPS lipid A biosynthesis. Catalyzes the N-acylation of UDP-3-O-acylglucosamine using 3-hydroxyacyl-ACP as the acyl donor. Is involved in the biosynthesis of lipid A, a phosphorylated glycolipid that anchors the lipopolysaccharide to the outer membrane of the cell. This chain is UDP-3-O-acylglucosamine N-acyltransferase, found in Hahella chejuensis (strain KCTC 2396).